A 433-amino-acid chain; its full sequence is 23S rRNA (uracil(1939)-C(5))-methyltransferase RlmD (433 aa).

The region spanning 10–68 (RTTTRQIITVSVNDLDSFGQGVARHNGKTLFIPGLLPQENAEVTVTEDKKQYARAKVVR) is the TRAM domain. [4Fe-4S] cluster is bound by residues cysteine 81, cysteine 87, cysteine 90, and cysteine 162. S-adenosyl-L-methionine is bound by residues glutamine 265, phenylalanine 294, asparagine 299, glutamate 315, asparagine 342, and aspartate 363. The active-site Nucleophile is cysteine 389.

This sequence belongs to the class I-like SAM-binding methyltransferase superfamily. RNA M5U methyltransferase family. RlmD subfamily.

The enzyme catalyses uridine(1939) in 23S rRNA + S-adenosyl-L-methionine = 5-methyluridine(1939) in 23S rRNA + S-adenosyl-L-homocysteine + H(+). Its function is as follows. Catalyzes the formation of 5-methyl-uridine at position 1939 (m5U1939) in 23S rRNA. The protein is 23S rRNA (uracil(1939)-C(5))-methyltransferase RlmD of Escherichia coli O157:H7.